Consider the following 245-residue polypeptide: MNFFYYKDFYQLSEISVGQHYYWQISNFQVHGQTLMTSWFVISLIMIIAFLSNLNMKKIPLAKSFQNLAEFVTEFILDLARTQVGKEDYLNWVPFLGAVFLFIFVSNWGGALLPWKLLELPNGELAAPTNDINTTVALALLTSFSYFYAGISKKGISYFGRYVQPTPFLLPINVLEDFTKPLSLSFRLFGNLLADELVIAVLVSLVPLFVPVPLMLLGLFTSAIQALVFSTLAGAYIGESVEDHH.

5 helical membrane-spanning segments follow: residues 34–54, 93–113, 132–152, 197–217, and 218–238; these read TLMT…LSNL, VPFL…GALL, INTT…AGIS, LVIA…LMLL, and GLFT…AYIG.

It belongs to the ATPase A chain family. In terms of assembly, F-type ATPases have 2 components, CF(1) - the catalytic core - and CF(0) - the membrane proton channel. CF(1) has five subunits: alpha(3), beta(3), gamma(1), delta(1), epsilon(1). CF(0) has four main subunits: a, b, b' and c.

It is found in the plastid. The protein localises to the chloroplast thylakoid membrane. Its function is as follows. Key component of the proton channel; it plays a direct role in the translocation of protons across the membrane. The protein is ATP synthase subunit a, chloroplastic of Bigelowiella natans (Pedinomonas minutissima).